The following is an 86-amino-acid chain: Large ribosomal subunit protein bL31B (86 aa).

This sequence belongs to the bacterial ribosomal protein bL31 family. Type B subfamily. As to quaternary structure, part of the 50S ribosomal subunit.

The protein is Large ribosomal subunit protein bL31B of Ralstonia pickettii (strain 12J).